The sequence spans 170 residues: MASTRIREARESDCGDIMRMIRELAEFEKLSHQVKISEEALRADGFGENPFFHCLVAEIIPAPGESQGSLVVGYGLYYFIYSTWTGRNVYLEDIYVMPQYRGQGIGTKIIKKVAEVALNKGCSQFRLAVLDWNKKAVNLYKFLGAQDLTESEGWLSFRFEGEAMRELAGR.

The N-acetyltransferase domain maps to 4 to 166; sequence TRIREARESD…FRFEGEAMRE (163 aa). Substrate is bound at residue 27–28; the sequence is FE. The residue at position 29 (K29) is an N6-acetyllysine. E92 contacts substrate. Acetyl-CoA-binding positions include 94–96, 102–107, 133–135, and Y140; these read IYV, GQGIGT, and NKK. The Proton donor role is filled by Y140. A substrate-binding site is contributed by E152.

This sequence belongs to the acetyltransferase family. Homodimer.

The protein localises to the cytoplasm. It catalyses the reaction S-(2-aminoethyl)-L-cysteine + acetyl-CoA = S-(2-acetamidoethyl)-L-cysteine + CoA + H(+). The catalysed reaction is an alkane-alpha,omega-diamine + acetyl-CoA = an N-acetylalkane-alpha,omega-diamine + CoA + H(+). In terms of biological role, catalyzes the N-acetylation of the amino acid thialysine (S-(2-aminoethyl)-L-cysteine), a L-lysine analog with the 4-methylene group substituted with a sulfur. May also catalyze acetylation of polyamines, such as norspermidine, spermidine or spermine. However, ability to acetylate polyamines is weak, suggesting that it does not act as a diamine acetyltransferase in vivo. The chain is Thialysine N-epsilon-acetyltransferase from Mus musculus (Mouse).